Consider the following 252-residue polypeptide: Type II secretion system protein N (252 aa).

Residues Met-1–Ala-4 are Cytoplasmic-facing. Residues Val-5–Ala-25 form a helical membrane-spanning segment. Residues Gln-26–Leu-252 are Periplasmic-facing.

It belongs to the GSP N family.

Its subcellular location is the cell inner membrane. In terms of biological role, involved in a type II secretion system (T2SS, formerly general secretion pathway, GSP) for the export of proteins. Required for secretion of cholera toxin through the outer membrane. This is Type II secretion system protein N (epsN) from Vibrio cholerae serotype O1 (strain ATCC 39315 / El Tor Inaba N16961).